A 403-amino-acid chain; its full sequence is Tetratricopeptide repeat protein 19, mitochondrial (403 aa).

A mitochondrion-targeting transit peptide spans Met-1 to Ala-67. 3 TPR repeats span residues Ile-154–Gly-187, Leu-297–Ala-330, and His-336–Ala-369.

It belongs to the TTC19 family. Binds to the mature mitochondrial complex III dimer, after the incorporation of the Rieske protein (UQCRFS1). Interacts with UQCRC1 and UQCRFS1. Interacts with ZFYVE26 and CHMP4B.

It localises to the mitochondrion inner membrane. In terms of biological role, required for the preservation of the structural and functional integrity of mitochondrial respiratory complex III by allowing the physiological turnover of the Rieske protein UQCRFS1. Involved in the clearance of UQCRFS1 N-terminal fragments, which are produced upon incorporation into the complex III and whose presence is detrimental for its catalytic activity. The protein is Tetratricopeptide repeat protein 19, mitochondrial (ttc19) of Danio rerio (Zebrafish).